A 465-amino-acid polypeptide reads, in one-letter code: Methionine aminopeptidase 2-2 (465 aa).

Over residues 1-13 the composition is skewed to basic and acidic residues; sequence MGSKTPNDHRRGP. Residues 1 to 92 form a disordered region; it reads MGSKTPNDHR…KKKTLLGGLQ (92 aa). The segment covering 44 to 55 has biased composition (acidic residues); it reads GETEDGEDEDDD. Basic residues predominate over residues 71–86; the sequence is TKKKNKRKKNKKKKKT. His-217 lines the substrate pocket. The a divalent metal cation site is built by Asp-238, Asp-249, and His-318. His-326 is a substrate binding site. Positions 351 and 446 each coordinate a divalent metal cation.

Belongs to the peptidase M24A family. Methionine aminopeptidase eukaryotic type 2 subfamily. Co(2+) is required as a cofactor. It depends on Zn(2+) as a cofactor. The cofactor is Mn(2+). Fe(2+) serves as cofactor.

The protein resides in the cytoplasm. The enzyme catalyses Release of N-terminal amino acids, preferentially methionine, from peptides and arylamides.. In terms of biological role, cotranslationally removes the N-terminal methionine from nascent proteins. The N-terminal methionine is often cleaved when the second residue in the primary sequence is small and uncharged (Met-Ala-, Cys, Gly, Pro, Ser, Thr, or Val). This is Methionine aminopeptidase 2-2 from Blastomyces gilchristii (strain SLH14081) (Blastomyces dermatitidis).